The primary structure comprises 259 residues: Tonin (259 aa).

An N-terminal signal peptide occupies residues methionine 1–alanine 18. The propeptide at proline 19–arginine 24 is activation peptide. The 232-residue stretch at isoleucine 25 to lysine 256 folds into the Peptidase S1 domain. 5 disulfides stabilise this stretch: cysteine 31/cysteine 171, cysteine 48/cysteine 64, cysteine 150/cysteine 217, cysteine 182/cysteine 196, and cysteine 207/cysteine 232. Catalysis depends on histidine 63, which acts as the Charge relay system. Histidine 63 serves as a coordination point for Zn(2+). Asparagine 106 carries an N-linked (GlcNAc...) asparagine glycan. The Zn(2+) site is built by histidine 113 and histidine 115. The active-site Charge relay system is the aspartate 118. An N-linked (GlcNAc...) asparagine glycan is attached at asparagine 189. The Charge relay system role is filled by serine 211.

Belongs to the peptidase S1 family. Kallikrein subfamily. In terms of assembly, monomer. Requires Zn(2+) as cofactor. In terms of tissue distribution, found in submaxillary gland.

It carries out the reaction Preferential cleavage of Arg-|-Xaa bonds in small molecule substrates. Highly selective action to release kallidin (lysyl-bradykinin) from kininogen involves hydrolysis of Met-|-Xaa or Leu-|-Xaa.. This protein has both trypsin- and chymotrypsin-like activities, being able to release angiotensin II from angiotensin I or angiotensinogen. This chain is Tonin (Klk2), found in Rattus norvegicus (Rat).